Consider the following 575-residue polypeptide: Urease subunit alpha (575 aa).

The Urease domain occupies 138–575; it reads GAVDCHVHLI…LPMAQRYFLF (438 aa). Residues histidine 143, histidine 145, and lysine 226 each contribute to the Ni(2+) site. Lysine 226 is subject to N6-carboxylysine. Histidine 228 serves as a coordination point for substrate. Residues histidine 255 and histidine 281 each coordinate Ni(2+). The active-site Proton donor is histidine 329. Ni(2+) is bound at residue aspartate 369.

This sequence belongs to the metallo-dependent hydrolases superfamily. Urease alpha subunit family. As to quaternary structure, heterotrimer of UreA (gamma), UreB (beta) and UreC (alpha) subunits. Three heterotrimers associate to form the active enzyme. Ni cation serves as cofactor. In terms of processing, carboxylation allows a single lysine to coordinate two nickel ions.

The protein localises to the cytoplasm. It catalyses the reaction urea + 2 H2O + H(+) = hydrogencarbonate + 2 NH4(+). It functions in the pathway nitrogen metabolism; urea degradation; CO(2) and NH(3) from urea (urease route): step 1/1. This is Urease subunit alpha from Frankia alni (strain DSM 45986 / CECT 9034 / ACN14a).